A 459-amino-acid chain; its full sequence is Lipase 4 (459 aa).

The first 14 residues, 1-14, serve as a signal peptide directing secretion; it reads MLFLLFLLVAPIYA. C110 and C281 are disulfide-bonded. S194 acts as the Charge relay system in catalysis. Residues N229 and N266 are each glycosylated (N-linked (GlcNAc...) asparagine). Residues D343 and H376 each act as charge relay system in the active site. A disulfide bond links C359 and C404.

This sequence belongs to the AB hydrolase superfamily. Lipase family. Class Lip subfamily.

The protein resides in the secreted. The catalysed reaction is a triacylglycerol + H2O = a diacylglycerol + a fatty acid + H(+). In terms of biological role, secreted lipase that is able to hydrolyze both the neutral triacylglycerols and the monopalmitate ester Tween 40, allowing the use of hydrolyzed products as carbon sources. Has broad lipolytic activity, which may be important for colonization and subsequent infection, therefore contributing to the persistence and virulence in human tissue. The chain is Lipase 4 from Candida albicans (strain SC5314 / ATCC MYA-2876) (Yeast).